An 89-amino-acid chain; its full sequence is Small ribosomal subunit protein uS19 (89 aa).

Belongs to the universal ribosomal protein uS19 family.

Functionally, protein S19 forms a complex with S13 that binds strongly to the 16S ribosomal RNA. In Bacteroides fragilis (strain YCH46), this protein is Small ribosomal subunit protein uS19.